The chain runs to 1123 residues: Probable serine/threonine-protein kinase nek3 (1123 aa).

A Protein kinase domain is found at 4–264 (YEEIKTIGKG…VNDILELPFI (261 aa)). ATP contacts are provided by residues 10–18 (IGKGSFGRA) and K33. D130 serves as the catalytic Proton acceptor. Low complexity-rich tracts occupy residues 283-307 (NNDSLNISNNSSGSNNSASNNISSS) and 327-415 (NNNN…TSLK). 6 disordered regions span residues 283 to 310 (NNDSLNISNNSSGSNNSASNNISSSTEV), 325 to 415 (NINN…TSLK), 440 to 802 (SKTP…TNSQ), 866 to 887 (SASTASTASTTNTTLTSGTNTM), 908 to 937 (SVKLSSKSSSPIKTSSSSSSSSSSSSSITD), and 990 to 1020 (SLNNSLTSSSSSIITNQNNQNNQNNQNNQNN). Polar residues predominate over residues 440–459 (SKTPISGTKNPTTSKITPSI). 4 stretches are compositionally biased toward low complexity: residues 478-529 (SKPT…SSSV), 557-576 (SNLSSQISSSSSSSSSSNSQ), 588-617 (SPTSTSTKSPTNPSPTLSSSSSLPKSSLKS), and 642-653 (NGNSNVNSTVLN). Over residues 654 to 665 (RSVSSLSIQHKP) the composition is skewed to polar residues. Composition is skewed to low complexity over residues 666-696 (TNSGSSSISSSSSGNNSNSNTTTNNNTTSTT), 712-738 (STPTSISTSNKSTTTTPTSSRSNTPST), and 752-802 (SSNG…TNSQ). The segment covering 908 to 935 (SVKLSSKSSSPIKTSSSSSSSSSSSSSI) has biased composition (low complexity).

It belongs to the protein kinase superfamily. NEK Ser/Thr protein kinase family. NIMA subfamily.

The enzyme catalyses L-seryl-[protein] + ATP = O-phospho-L-seryl-[protein] + ADP + H(+). It catalyses the reaction L-threonyl-[protein] + ATP = O-phospho-L-threonyl-[protein] + ADP + H(+). This Dictyostelium discoideum (Social amoeba) protein is Probable serine/threonine-protein kinase nek3 (nek3).